Here is a 158-residue protein sequence, read N- to C-terminus: Probable transcription regulator ArfM (158 aa).

Activates, in anaerobic conditions, the transcription of the fermentative operons lctEP and alsDS, of the hmp gene encoding a flavohemoglobin-like protein, the nitrite reductase operon nasDE and the heme biosynthesis genes hemN and hemZ. The chain is Probable transcription regulator ArfM (arfM) from Bacillus subtilis (strain 168).